A 145-amino-acid chain; its full sequence is Putative pre-16S rRNA nuclease (145 aa).

It belongs to the YqgF nuclease family.

The protein resides in the cytoplasm. In terms of biological role, could be a nuclease involved in processing of the 5'-end of pre-16S rRNA. This Pseudomonas fluorescens (strain SBW25) protein is Putative pre-16S rRNA nuclease.